The following is a 115-amino-acid chain: Putative septation protein SpoVG (115 aa).

The disordered stretch occupies residues 88–115; the sequence is PGTIATSEVSSQLEESDSDKTLSEDLKA. Residues 91–100 are compositionally biased toward polar residues; that stretch reads IATSEVSSQL. The span at 105–115 shows a compositional bias: basic and acidic residues; the sequence is SDKTLSEDLKA.

Belongs to the SpoVG family.

Functionally, could be involved in septation. The chain is Putative septation protein SpoVG from Macrococcus caseolyticus (strain JCSC5402) (Macrococcoides caseolyticum).